The following is a 351-amino-acid chain: Mediator of RNA polymerase II transcription subunit 4 (351 aa).

Residues 30-68 (QKLAEELLAAEAELSKSLKLLETHQNNNARLQQLRQETS) are a coiled coil. Disordered stretches follow at residues 156–217 (TQTQ…PAHL) and 256–351 (PRGY…DEDD). The segment covering 163-177 (NSFNLSFNGTVSTPI) has biased composition (polar residues). The segment covering 182-198 (PTPTTTNDTQPSTQLPP) has biased composition (low complexity). Residues 257–308 (RGYDPAEQERRRVAEEKARREAEERARLEREEAERKGREERERMAREREAAR) show a composition bias toward basic and acidic residues. A coiled-coil region spans residues 262–311 (AEQERRRVAEEKARREAEERARLEREEAERKGREERERMAREREAARLRN). The span at 340-351 (ADDDEDDEDEDD) shows a compositional bias: acidic residues.

It belongs to the Mediator complex subunit 4 family. As to quaternary structure, component of the Mediator complex.

It is found in the nucleus. In terms of biological role, component of the Mediator complex, a coactivator involved in the regulated transcription of nearly all RNA polymerase II-dependent genes. Mediator functions as a bridge to convey information from gene-specific regulatory proteins to the basal RNA polymerase II transcription machinery. Mediator is recruited to promoters by direct interactions with regulatory proteins and serves as a scaffold for the assembly of a functional preinitiation complex with RNA polymerase II and the general transcription factors. The chain is Mediator of RNA polymerase II transcription subunit 4 (MED4) from Chaetomium globosum (strain ATCC 6205 / CBS 148.51 / DSM 1962 / NBRC 6347 / NRRL 1970) (Soil fungus).